The sequence spans 1343 residues: DNA-directed RNA polymerase subunit beta (1343 aa).

This sequence belongs to the RNA polymerase beta chain family. In terms of assembly, the RNAP catalytic core consists of 2 alpha, 1 beta, 1 beta' and 1 omega subunit. When a sigma factor is associated with the core the holoenzyme is formed, which can initiate transcription.

The enzyme catalyses RNA(n) + a ribonucleoside 5'-triphosphate = RNA(n+1) + diphosphate. Functionally, DNA-dependent RNA polymerase catalyzes the transcription of DNA into RNA using the four ribonucleoside triphosphates as substrates. The protein is DNA-directed RNA polymerase subunit beta of Shewanella baltica (strain OS155 / ATCC BAA-1091).